We begin with the raw amino-acid sequence, 428 residues long: Histidinol dehydrogenase (428 aa).

Residues tyrosine 127, glutamine 189, and asparagine 212 each contribute to the NAD(+) site. Residues serine 235, glutamine 257, and histidine 260 each coordinate substrate. Residues glutamine 257 and histidine 260 each contribute to the Zn(2+) site. Active-site proton acceptor residues include glutamate 325 and histidine 326. Substrate-binding residues include histidine 326, aspartate 359, glutamate 413, and histidine 418. Zn(2+) is bound at residue aspartate 359. Histidine 418 lines the Zn(2+) pocket.

This sequence belongs to the histidinol dehydrogenase family. It depends on Zn(2+) as a cofactor.

The catalysed reaction is L-histidinol + 2 NAD(+) + H2O = L-histidine + 2 NADH + 3 H(+). It functions in the pathway amino-acid biosynthesis; L-histidine biosynthesis; L-histidine from 5-phospho-alpha-D-ribose 1-diphosphate: step 9/9. Its function is as follows. Catalyzes the sequential NAD-dependent oxidations of L-histidinol to L-histidinaldehyde and then to L-histidine. The sequence is that of Histidinol dehydrogenase from Prochlorococcus marinus subsp. pastoris (strain CCMP1986 / NIES-2087 / MED4).